Here is a 557-residue protein sequence, read N- to C-terminus: Transcription factor fil1 (557 aa).

Residues 234-258 are disordered; that stretch reads SPVKRELNDSTSPSKLSESSSSLTG. A compositionally biased stretch (low complexity) spans 243–258; that stretch reads STSPSKLSESSSSLTG. 2 consecutive GATA-type zinc fingers follow at residues 365–390 and 419–443; these read CFNC…CNAC and CANC…CNAC.

The protein localises to the nucleus. It localises to the cytoplasm. Functionally, activates genes required for amino acid biosynthesis and acts as a master transcriptional regulator during amino acid starvation. Binds variations of the DNA sequence 5'-GAT[AC]GC-3'. This is Transcription factor fil1 from Schizosaccharomyces pombe (strain 972 / ATCC 24843) (Fission yeast).